The primary structure comprises 107 residues: Thiosulfate sulfurtransferase GlpE (107 aa).

Residues 17–101 (AAGAARLVDI…GFEAWRREFP (85 aa)) enclose the Rhodanese domain. Cys65 (cysteine persulfide intermediate) is an active-site residue.

The protein belongs to the GlpE family.

The protein resides in the cytoplasm. It catalyses the reaction thiosulfate + hydrogen cyanide = thiocyanate + sulfite + 2 H(+). It carries out the reaction thiosulfate + [thioredoxin]-dithiol = [thioredoxin]-disulfide + hydrogen sulfide + sulfite + 2 H(+). In terms of biological role, transferase that catalyzes the transfer of sulfur from thiosulfate to thiophilic acceptors such as cyanide or dithiols. May function in a CysM-independent thiosulfate assimilation pathway by catalyzing the conversion of thiosulfate to sulfite, which can then be used for L-cysteine biosynthesis. The protein is Thiosulfate sulfurtransferase GlpE of Aeromonas hydrophila subsp. hydrophila (strain ATCC 7966 / DSM 30187 / BCRC 13018 / CCUG 14551 / JCM 1027 / KCTC 2358 / NCIMB 9240 / NCTC 8049).